A 30-amino-acid chain; its full sequence is Bacteriocin plantaricin KL-1Y (30 aa).

It is found in the secreted. Bacteriocin with activity against species of Lactobacillus, Lactococcus, Pediococcus, Leuconostoc and against B.subtilis and, to a lesser extent, against B.coagulans, B.cereus and species of Enterococcus, Listeria, Kocuria, Staphylococcus, Corynebacterium, Salmonella, Pseudomonas and Escherichia. The polypeptide is Bacteriocin plantaricin KL-1Y (Lactiplantibacillus plantarum (Lactobacillus plantarum)).